Reading from the N-terminus, the 398-residue chain is MTGANRHYVLAAGGTGGHLLPAFALAAELDRRGHHVALITDERGAKIPGKPDFLPAHVIPAGRFGKNPLRWVGGLRAVWKGREMAKRLFESFQPSAVVGFGGYPALPAMLAASREDIPSIIHEQNAVLGRVNRLQAGRVSAIATAYPEIQRLKPKHAEKIHLVGNPVRAGVLSLRDEPFPPFTEDGLLKVLVTGGSQGASVLSQIVPDGLAMLPPALRQRLQVTQQCRPEDLDTVRERYKTHDIPAELGSYFEDMAARLADAHLFIGRAGASTIAELTAVGRPAILVPLPIATDDHQAHNTREVVKAGGARMIRQEKFTPKELAKQIQALGQRPDTLATAAHAAWNCGRPKAVEDLADLVESFGGADMMDVIKVGGNNARAASQGVAVGQGAAKERAE.

UDP-N-acetyl-alpha-D-glucosamine-binding positions include 15–17 (TGG), N125, R168, S196, and Q297.

It belongs to the glycosyltransferase 28 family. MurG subfamily.

The protein localises to the cell inner membrane. It carries out the reaction di-trans,octa-cis-undecaprenyl diphospho-N-acetyl-alpha-D-muramoyl-L-alanyl-D-glutamyl-meso-2,6-diaminopimeloyl-D-alanyl-D-alanine + UDP-N-acetyl-alpha-D-glucosamine = di-trans,octa-cis-undecaprenyl diphospho-[N-acetyl-alpha-D-glucosaminyl-(1-&gt;4)]-N-acetyl-alpha-D-muramoyl-L-alanyl-D-glutamyl-meso-2,6-diaminopimeloyl-D-alanyl-D-alanine + UDP + H(+). The protein operates within cell wall biogenesis; peptidoglycan biosynthesis. Functionally, cell wall formation. Catalyzes the transfer of a GlcNAc subunit on undecaprenyl-pyrophosphoryl-MurNAc-pentapeptide (lipid intermediate I) to form undecaprenyl-pyrophosphoryl-MurNAc-(pentapeptide)GlcNAc (lipid intermediate II). The chain is UDP-N-acetylglucosamine--N-acetylmuramyl-(pentapeptide) pyrophosphoryl-undecaprenol N-acetylglucosamine transferase from Erythrobacter litoralis (strain HTCC2594).